Consider the following 146-residue polypeptide: Hemoglobin subunit delta (146 aa).

In terms of domain architecture, Globin spans 2–146; that stretch reads HLTGDEKSAV…VATALAHKYH (145 aa). Ser-50 bears the Phosphoserine mark. Positions 63 and 92 each coordinate heme b.

Belongs to the globin family. Heterotetramer of two delta chains and two alpha chains. Red blood cells.

This chain is Hemoglobin subunit delta (HBD), found in Aotus trivirgatus (Three-striped night monkey).